The sequence spans 226 residues: Thiopurine S-methyltransferase (226 aa).

Residues W10, L47, E68, and R130 each contribute to the S-adenosyl-L-methionine site.

It belongs to the class I-like SAM-binding methyltransferase superfamily. TPMT family.

It is found in the cytoplasm. It carries out the reaction S-adenosyl-L-methionine + a thiopurine = S-adenosyl-L-homocysteine + a thiopurine S-methylether.. The protein is Thiopurine S-methyltransferase of Shewanella sediminis (strain HAW-EB3).